The sequence spans 216 residues: Ribonuclease HII (216 aa).

The RNase H type-2 domain occupies A27–G216. Residues D33, E34, and D125 each contribute to the a divalent metal cation site.

Belongs to the RNase HII family. Requires Mn(2+) as cofactor. Mg(2+) serves as cofactor.

The protein localises to the cytoplasm. It catalyses the reaction Endonucleolytic cleavage to 5'-phosphomonoester.. Functionally, endonuclease that specifically degrades the RNA of RNA-DNA hybrids. The sequence is that of Ribonuclease HII from Geotalea daltonii (strain DSM 22248 / JCM 15807 / FRC-32) (Geobacter daltonii).